The chain runs to 379 residues: Oxidoreductase chry3 (379 aa).

2 disordered regions span residues Met-1–Pro-23 and Glu-126–Met-150. The segment covering Glu-126 to Asp-138 has biased composition (acidic residues).

The protein belongs to the asaB hydroxylase/desaturase family.

It functions in the pathway pigment biosynthesis. Functionally, oxidoreductase; part of the gene cluster that mediates the biosynthesis of the yellow pigment chrysogine. Pyruvic acid and anthranilic acid are likely substrates for the nonribosomal peptide synthetase chry1/NRPS14, with pyruvic acid adenylated by the first A domain and anthranilic acid by the second. If pyruvic acid and anthranilic acid are merged and released from chry1/NRPS14 by hydrolysis, a subsequent amidation would lead to 2-pyruvoylaminobenzamide. This process is probably catalyzed by the amidotransferase chry2 using glutamine as amino donor. The dehydrogenase chry5 that has a terminal berberine bridge domain for C-N cyclization could catalyze the cyclization of 2-pyruvoylaminobenzamide to yield acetyl-4(3H)-quinazolidinone. A final reduction of acetyl-4(3H)-quinazolidinone catalyzed by the oxidoreductase chry4 would result in chrysogine. This chain is Oxidoreductase chry3, found in Gibberella zeae (strain ATCC MYA-4620 / CBS 123657 / FGSC 9075 / NRRL 31084 / PH-1) (Wheat head blight fungus).